A 99-amino-acid chain; its full sequence is Large ribosomal subunit protein uL23 (99 aa).

It belongs to the universal ribosomal protein uL23 family. As to quaternary structure, part of the 50S ribosomal subunit. Contacts protein L29, and trigger factor when it is bound to the ribosome.

In terms of biological role, one of the early assembly proteins it binds 23S rRNA. One of the proteins that surrounds the polypeptide exit tunnel on the outside of the ribosome. Forms the main docking site for trigger factor binding to the ribosome. The protein is Large ribosomal subunit protein uL23 of Leifsonia xyli subsp. xyli (strain CTCB07).